A 221-amino-acid polypeptide reads, in one-letter code: Probable septum site-determining protein MinC (221 aa).

This sequence belongs to the MinC family. Interacts with MinD and FtsZ.

Cell division inhibitor that blocks the formation of polar Z ring septums. Rapidly oscillates between the poles of the cell to destabilize FtsZ filaments that have formed before they mature into polar Z rings. Prevents FtsZ polymerization. The polypeptide is Probable septum site-determining protein MinC (Shewanella sp. (strain ANA-3)).